We begin with the raw amino-acid sequence, 122 residues long: Alpha-amylase/trypsin inhibitor (122 aa).

5 disulfide bridges follow: C6–C55, C20–C44, C29–C85, C45–C103, and C57–C114.

This sequence belongs to the protease inhibitor I6 (cereal trypsin/alpha-amylase inhibitor) family. As to expression, seeds.

The protein localises to the secreted. Functionally, may play a protective role against endo- and exogenous hydrolytic activities in the Ragi seeds. This is Alpha-amylase/trypsin inhibitor from Eleusine coracana (Indian finger millet).